The chain runs to 247 residues: MAGHSKWANIKFRKGVQDAKRGKIFTKLIREITVAARMGGGDESSNPRLRDAVKKALNANMKRDTIDNAVKRGVGGADGEAMIAMRYEGYGPGGVAILVDCLSDNKNRTVSEVRHAFSKHGGNLGTDGSVSYLFTNQGEILMASNQPEDKVMEIAIDAGASDVAVEDSQIEIITPVEAYHTVLNALQDAGLEVEQSHLTMRAQTLVPISDETAESLIKLIDMLEDLDDVQEVYSNAEFSEKILESMN.

Belongs to the TACO1 family.

It localises to the cytoplasm. This Legionella pneumophila (strain Paris) protein is Probable transcriptional regulatory protein lpp1249.